The primary structure comprises 900 residues: Translation initiation factor IF-2 (900 aa).

Basic and acidic residues predominate over residues 80–95 (LEEQSRKTVEKEDQLR). Disordered stretches follow at residues 80-106 (LEEQ…VPGR), 149-169 (AVEA…DSPV), and 221-268 (DEFD…VDEK). A compositionally biased stretch (basic residues) spans 253–262 (GKKKGKKKKK). Positions 397–567 (TRPPVVTIMG…LTEAEVRELK (171 aa)) constitute a tr-type G domain. The G1 stretch occupies residues 406-413 (GHVDHGKT). Residue 406–413 (GHVDHGKT) participates in GTP binding. Residues 431–435 (GITQH) are G2. The tract at residues 453–456 (DTPG) is G3. GTP-binding positions include 453–457 (DTPGH) and 507–510 (NKID). Residues 507 to 510 (NKID) are G4. Residues 543–545 (SAK) are G5.

The protein belongs to the TRAFAC class translation factor GTPase superfamily. Classic translation factor GTPase family. IF-2 subfamily.

It localises to the cytoplasm. Its function is as follows. One of the essential components for the initiation of protein synthesis. Protects formylmethionyl-tRNA from spontaneous hydrolysis and promotes its binding to the 30S ribosomal subunits. Also involved in the hydrolysis of GTP during the formation of the 70S ribosomal complex. This Chlorobium phaeovibrioides (strain DSM 265 / 1930) (Prosthecochloris vibrioformis (strain DSM 265)) protein is Translation initiation factor IF-2.